Here is a 453-residue protein sequence, read N- to C-terminus: Prenyltransferase nscD (453 aa).

Dimethylallyl diphosphate is bound by residues Arg118, Lys200, Tyr202, Lys271, Tyr273, and Tyr428.

It belongs to the tryptophan dimethylallyltransferase family.

It participates in secondary metabolite biosynthesis. Functionally, prenyltransferase; part of the gene cluster that mediates the biosynthesis of neosartoricin, a prenylated anthracenone that exhibits T-cell antiproliferative activity, suggestive of a physiological role as an immunosuppressive agent. The non-reducing polyketide synthase nscA probably synthesizes and cyclizes the decaketide backbone. The hydrolase nscB then mediates the product release through hydrolysis followed by spontaneous decarboxylation. The prenyltransferase nscD catalyzes the addition of the dimethylallyl group to the aromatic C5. The FAD-dependent monooxygenase nscC is then responsible for the stereospecific hydroxylation at C2. There is no gene encoding O-acetyltransferase in the nsc gene cluster; thus, the last step of 2-O-acetylation leading to neosartoricin may be catalyzed by an unidentified O-acetyltransferase. The sequence is that of Prenyltransferase nscD from Aspergillus fumigatus (strain ATCC MYA-4609 / CBS 101355 / FGSC A1100 / Af293) (Neosartorya fumigata).